A 97-amino-acid polypeptide reads, in one-letter code: Defensin alpha 4 (97 aa).

The first 19 residues, 1-19, serve as a signal peptide directing secretion; that stretch reads MRIIAILAAILLVALQVRA. A propeptide spanning residues 20–63 is cleaved from the precursor; the sequence is GPLQARGDEAPGQEQRGPEDQDISISFAWDKSSALQVSGSTRGM. 3 disulfide bridges follow: cysteine 65/cysteine 93, cysteine 67/cysteine 82, and cysteine 72/cysteine 92. Aspartate 97 is a propeptide.

It belongs to the alpha-defensin family. In terms of assembly, homodimer; homodimerization seems to be required for killing S.aureus, but not E.coli. Interacts with CD4. Interacts with Bacillus anthracis lef; homodimerization is required for the interaction. In terms of processing, the three-dimensional structure formed by the three intramolecular disulfide bridges is indispensable for effective bacterial killing.

It localises to the secreted. The protein localises to the cytoplasmic vesicle. The protein resides in the secretory vesicle. Its function is as follows. Host-defense peptide that has antimicrobial activity against Gram-negative bacteria, and to a lesser extent also against Gram-positive bacteria and fungi. Exhibits antimicrobial activity against Gram-negative E.coli and E.aerogenes and Gram-positive S.faecalis, S.aureus and B.cereus and the yeast C.albicans (in vitro). Inhibits corticotropin (ACTH)-stimulated corticosterone production (in vitro). Inhibits enzymatic activity of B.anthracis lef/anthrax lethal factor (in vitro). The protein is Defensin alpha 4 (DEFA4) of Pan troglodytes (Chimpanzee).